Reading from the N-terminus, the 283-residue chain is Phosphatidylserine decarboxylase proenzyme (283 aa).

Active-site charge relay system; for autoendoproteolytic cleavage activity residues include Asp-96, His-152, and Ser-250. The active-site Schiff-base intermediate with substrate; via pyruvic acid; for decarboxylase activity is the Ser-250. Residue Ser-250 is modified to Pyruvic acid (Ser); by autocatalysis.

This sequence belongs to the phosphatidylserine decarboxylase family. PSD-B subfamily. Prokaryotic type I sub-subfamily. Heterodimer of a large membrane-associated beta subunit and a small pyruvoyl-containing alpha subunit. Requires pyruvate as cofactor. Is synthesized initially as an inactive proenzyme. Formation of the active enzyme involves a self-maturation process in which the active site pyruvoyl group is generated from an internal serine residue via an autocatalytic post-translational modification. Two non-identical subunits are generated from the proenzyme in this reaction, and the pyruvate is formed at the N-terminus of the alpha chain, which is derived from the carboxyl end of the proenzyme. The autoendoproteolytic cleavage occurs by a canonical serine protease mechanism, in which the side chain hydroxyl group of the serine supplies its oxygen atom to form the C-terminus of the beta chain, while the remainder of the serine residue undergoes an oxidative deamination to produce ammonia and the pyruvoyl prosthetic group on the alpha chain. During this reaction, the Ser that is part of the protease active site of the proenzyme becomes the pyruvoyl prosthetic group, which constitutes an essential element of the active site of the mature decarboxylase.

The protein localises to the cell membrane. The enzyme catalyses a 1,2-diacyl-sn-glycero-3-phospho-L-serine + H(+) = a 1,2-diacyl-sn-glycero-3-phosphoethanolamine + CO2. Its pathway is phospholipid metabolism; phosphatidylethanolamine biosynthesis; phosphatidylethanolamine from CDP-diacylglycerol: step 2/2. Its function is as follows. Catalyzes the formation of phosphatidylethanolamine (PtdEtn) from phosphatidylserine (PtdSer). The protein is Phosphatidylserine decarboxylase proenzyme of Acinetobacter baumannii (strain ATCC 17978 / DSM 105126 / CIP 53.77 / LMG 1025 / NCDC KC755 / 5377).